Consider the following 2618-residue polypeptide: MTHQNHQTNGASLEDCHTNFYALTDLCGIKWRKFVNGERPNASSDPLADPILRSYSRCIQADMLCVWRRVQSTKTDHADPNALTFEMTTSTKVHPPLSLAAAKELWIFWYGEEPDLSELVDAELLRVAANQALWNGTWKGALTYECRSLLFKALHNLMERFVLTKDIVRFGKWFVQPCTSSDRLFGRSSQHLSFSFTFFVHGDTVCASIDLREHPAVRPLTKEHLTEAAAAFAAASSPPGSNGSAASAGGAVPNPGQDPNGASMDGLDGGEGAAKAAPPPHARKVMLAPFGIAGILTGNSYKASDPIAEKILEDWASFFPLCNKDNTDVPPVVEVVSGGHKMYHPTNYVLVTDLDDMEHMEFVEMQKMQSSVAGAAAESAVLASLSCPPGAASAPSSMGAAPSATAVPLGPASLNAPALAGAGVGATASSAAKEISRKAAPQAVSALERLAFQPYYDQRPTSGFTFNTNNTHIPASAAVEMPERTWQDCVMNTLHVDAAAAAAAVASSTPASGTGSLSADGDENEQNKPPQDSKQLVQQQIQQQQQRQKLWNFVDPMQKAPCICTKHLGNTPHGTPHGGASTYSRNSLGGDSSMPVASVESPATPAPSPHPNSAHSQPTSVPPAEQLLNMSPHAPTSVSNLQQPPTPIDHLLDKNTPAPTPTDQHDSKSITASPYVHQTPSVEPPSYTDHAAGGGPAGGQGLGTGPGSVPAQQPATPTAATSAGGAGSGGPSNAIGANAVGTISVKKLEMQQQTPSAAMAIKQEPGAQGRGVGGVTSTTEALNNFKRLYNPPKLTLKDPDSFYDEEWLKEVIYDFQYQEYWDYSTVKRPKMEKQRRPRYAKNLYEGQNHVKPVMPSPGSVYGSQLLSLDESASQAGGRGGGGQAAGSSGGGLVGIANSTASGSDVEADGSSFFQGLNIKTEPGLHSPSCKETSKSSGGNSSGGGSGSGGNLFTAEGLNPSLNDLEQLFETSSNDECSSVQIHTPPDSNNPSNGGCSAVTNTIEDLKRSTAVASAAVAAAAAAAASGAGNIQAEDLTKMFPTPPSHEQQHPNSSPCQTDVVMTDLSVDTTTTIITSSITTTCNTTITSSINTTTTACSNPSNSIMLAAAQAPVTVVAIQTVSKMVKQEYNLELGSPMEEPINDWDYVYRPPQQEKFVGSTRYAPLTNLPSQTQPPLTLPTGCFYQPTWSSHKSRAATLAKAAAAQQQQHQKHQALQQRIQLHQQKLQQLQLQNQQQQQAAAAAAAAASGGVGHQKHQHQHLHDLLSAAPRTPLTPSTVPQPLSSGGSQYLLNQLNCPQAPPGASMQQLMHRAGMSPISPGPGMGPYAARSSPMSRATPTHPPPPYPYDLAVASPATSTSSYLNRPLHSQEHPHMHGLGGGATGVVGHGTGGGGHMGMVAYTGDAGIVSGGTAMAAGSSSLLQELPEVNSVLVNILLYDTALNVFRDHNFDSSSVCVCNADTQKIGNIRGADSGVYVPLPGVSFNPFPSGAGGALAGQRMLNGPSSAGFGGMRMISAFGGSPASASMPGAGSGHGHGPNGGSNSSSCTPPSSNPHITGYVDDDPVECTCGFSAVVNRRLSHRAGLFYEDEVEITGIADDPGRNKQPTLLSIIQSLSRKNQNKQGPGETSSALDKIGAGGLPNGQLEQLGHAVFDLLLDQCSIIQTSSSSVHRALQSHRRRMSRQRRIFGNNGAPTASLASIANVLEFMDAHDVISLALEQSRLAFENQRMDNMMDFHGNGSSSSHQQQQLTAFHAPPPALRHKLAGIGAGRLTVHKWPYLPVGFTRSNKEIVRTMNAIQPMLQNAFHCKSRGGSGSKDASSYNTVSGPLTWRQFHRLAGRASGQCEPQPIPSVVVGYEKDWISVAPHSIHYWDKFLLEPYSYARDVVYVVVCPDNEHVVNCTRSYFRELSSTYEMCKLGKHTPIRGWDGFLQVGAARNNVPADRETTPLDDWLRTLEHAALAEQIRRYAVAFIHQLAPYLSRVPNDKTLLNPPDGSGNSHSKGGSSCSSNSSSVSGLPGGDLPTDNIKLEPGTEPQVQPMETNEIKQEPGVGKGGTAAGETKPTLILGDPLGMGETLEDINPSAIVLYVVNPFTFASDSCELERLALIALLRCYAELLKAVPDSVRSQMNIQIISLESVMELGPCGNRKRFSDEIRCLALNIFSQCRRHLVHAQSVKSLTGFGTAANMEAFLKTKDEPNRRAYKMYTAPFVLAPMHERNDKTDFSRSAGSMHGQNEHRYSVMYCNYCLSEDQAWLLATATDERGEMLEKICINIDVPNRARRRKAPARYVALKKLMDFIMGIISQTSQMWRLVIGRIGRIGHSELKSWSFLLSKQQLQKASKQFKDMCKQCTLMYPPTILSACLVTLEPDAKLRVMPDQFTPDERFSQISMQNPLATPQDVTCTHILVFPTSAVCAPFTRQFQNEPQVDDDFLTFEEEGNEDFSDADIGDLFWDTHMDRVSNHGSPGRMDDNRSWQSAGGNNFKCTPPQEVEEVGSLNQQPISVGYMVSTAPTGRMPAWFWSACPHLEDVCPVFLKTALHLHVPSIQSADDILNSTNAHQSGNDHPLDSNLTADVLRFVLEGYNALSWLALDSNTHDRLSCLPINVQTLMDLYYLTAAIA.

3 stretches are compositionally biased toward low complexity: residues 232–255 (FAAA…VPNP), 509–519 (TPASGTGSLSA), and 532–543 (DSKQLVQQQIQQ). 10 disordered regions span residues 232–279 (FAAA…AAPP), 509–543 (TPAS…QIQQ), 569–731 (GNTP…SGGP), 916–957 (LNIK…AEGL), 970–995 (TSSN…NGGC), 1036–1055 (TKMF…SSPC), 1268–1384 (PRTP…TGVV), 1521–1557 (ASAS…ITGY), 1614–1633 (SRKN…LDKI), and 1985–2060 (KTLL…GETK). 2 positions are modified to phosphothreonine: threonine 571 and threonine 575. Composition is skewed to polar residues over residues 581–590 (STYSRNSLGG), 634–643 (APTSVSNLQQ), and 669–681 (SITA…QTPS). Positions 692 to 706 (AGGGPAGGQGLGTGP) are enriched in gly residues. Low complexity predominate over residues 711 to 723 (AQQPATPTAATSA). Residues 939–949 (NSSGGGSGSGG) show a composition bias toward gly residues. The segment covering 1272 to 1295 (LTPSTVPQPLSSGGSQYLLNQLNC) has biased composition (polar residues). Composition is skewed to gly residues over residues 1375 to 1384 (GLGGGATGVV) and 1528 to 1538 (AGSGHGHGPNG). Positions 1539–1553 (GSNSSSCTPPSSNPH) are enriched in low complexity. Residues 1614-1629 (SRKNQNKQGPGETSSA) are compositionally biased toward polar residues. Over residues 1993-2014 (GSGNSHSKGGSSCSSNSSSVSG) the composition is skewed to low complexity. Phosphoserine is present on residues serine 2472 and serine 2475.

This sequence belongs to the Mediator complex subunit 13 family. Component of the Cdk8 module of the Mediator complex, composed of CycC, Cdk8, kto and skd.

The protein resides in the nucleus. Component of the Mediator complex, a coactivator involved in the regulated transcription of nearly all RNA polymerase II-dependent genes. Mediator functions as a bridge to convey information from gene-specific regulatory proteins to the basal RNA polymerase II transcription machinery. Mediator is recruited to promoters by direct interactions with regulatory proteins and serves as a scaffold for the assembly of a functional preinitiation complex with RNA polymerase II and the general transcription factors. Required for leg and eye development and macrochaete specification or differentiation. Negatively regulates sex comb development. Required for activated transcription of the MtnB and MtnD genes. This chain is Mediator of RNA polymerase II transcription subunit 13 (skd), found in Drosophila melanogaster (Fruit fly).